Reading from the N-terminus, the 568-residue chain is MAGSPRVYNSQHCGFSVAVMRFLLLLLTAVLISLAWLSPDHSYPWLTFASEMLSFAAFLSLLALFLNRPLELPRVQLLALPVVFIPMIQWGFGLVVDFSSALLSSAYLLGFWLTMLLGYNLSRSSADRERMFTLSSYLLFAVALLTSLIACIQWLNLESHVPGVMNLYSHRPYANFAQPNNMSTFLILGLLGCLYLAEKQKLKQYYIWPVAALIVFAITLSQSRTAWVFGLFFIIYWTYKSWRYPTHLKRYAVLLWAIGFFAVGLLFPRFTRLIQKLKEGNVVQTSSVVERASAGHERLGIWQQMLDAIHQKPWTGYGWNQTSIAELSSMSSNTIHVWFTSAHNVVLDLLVWNGWLLGGLITICILIWICWLNVHAKTTESIIACLMVSAVWIHTLLEYPLQYAYFLLPVGFLMGLIQAQTPDQTARSVPVSVIRSIWVIGIMLLALIWRDYNLYKVNSLRILKNQPANIEIWGSSKILVLTEFDQRLYWLKLSPVAPLTSTELDQIEKMVQNKATPYNLQKYAQLLLANHQFEKAQQQIAYLNRLHKKDYTLQDLQQANASAVESSK.

12 helical membrane-spanning segments follow: residues V17–L37, L46–L66, L78–F98, A101–L121, F132–I152, F176–L196, I214–I234, Y251–T271, L349–I369, A376–L396, L397–I417, and V429–W449.

This sequence belongs to the PglL O-oligosaccharyltransferase family.

It localises to the cell membrane. Its function is as follows. Catalyzes the O-glycosylation of multiple protein targets. Is responsible for general protein glycosylation within A.baylyi ADP1. Does not act as an O-antigen ligase. This Acinetobacter baylyi (strain ATCC 33305 / BD413 / ADP1) protein is General O-oligosaccharyltransferase.